Here is a 1098-residue protein sequence, read N- to C-terminus: MEELGAAASGAGGGGGGGEEHGGGRSNKRGAGNRAANEEETRNKPKLRDRITSFRKSATKREKPVIQHSIDYQTAVVEIPPALIVHDDRSLILSEKEVLDLFEKMMEDMNLNEEKKAPLRKKDFSIKREMVVQYISATSKSIVGSKVLGGLKNSKHEFTLSSQEYVHELRSGISDEKLLNCLESLRVSLTSHPVSWVNNFGYEGLGVLLDVLEKLLDKKQQENIDKKNQYKVIQCLKAFMNNKFGLQRILGDERSLLLLARAIDPKQQNMMTEIVKILSAICIVGEENILDKLLGGITAAAELNNRERFSPIVEGLENNEALHLQVACMQFINALVTSPYDLDFRIHLRNEFLRCGLKAMLPTLKEIENEGLDIQLRVFEENKEDDLSELSHRLNDIRAEMDDINEVYHLLYNMLKDTAAEPYLLSILQHFLLIRNDYYIRPQYYKIIEECVSQIVLHCSGMDPDFKYRQRIDFDFTHLLDACVNKAKVEENEQKAMEFSKKFDEEFTARQEAQAELQKRDEKIKELETEIQQLRGQGVPSAIPGPPPPPPLPGAGPCPPPPPPPPPPPPLPGVVPPPPPPLPGMPGIPPPPPPPLSGVPPPPPPPGGVFPLLSGPIELPYGMKQKKLYKPDIPMKRINWSKIEPKELSENCVWLKLKEEKYENADLFAKLALTFPSQMKGQRNTEAAEENRSGPPKKKVKELRILDTKTAQNLSIFLGSYRMPYEEIKNIILEVNEEMLSEALIQNLVKYLPDQNALRELAQLKSEYDDLCEPEQFGVVMSTVKMLRPRLTSILFKLTFEEHVNNIKPSIIAVTLACEELKKSESFKRLLELILLVGNYMNSGSRNAQSLGFKINFLCKIKDTKSADQKSTLLHFLAEICDEKYRDILKFPDELEHVESAGKVSAQILKSNLVAMEQSILHLEKNIKNFPPAESHHDKFVEKMMSFTQNAREQYDKLSTMHSNMLKLYESLGEYFIFDPNTVNMEEFFGDLNTFRTLFLEALKENHKRKEMEEKSRRAKLAKEKAEQEKLERQKKKKQLIDINKEGDETGVMDNLLEALQSGAAFRDRRKRIPRNPDNRRPPLERSRSRHNGAMSSK.

M1 bears the N-acetylmethionine mark. The interval 1 to 62 is disordered; the sequence is MEELGAAASG…SFRKSATKRE (62 aa). Basic and acidic residues predominate over residues 36 to 52; that stretch reads ANEEETRNKPKLRDRIT. In terms of domain architecture, GBD/FH3 spans 90–463; it reads SLILSEKEVL…QIVLHCSGMD (374 aa). 2 coiled-coil regions span residues 375-416 and 490-539; these read QLRV…NMLK and EENE…GQGV. 5 disordered regions span residues 537–565, 578–611, 679–699, 1007–1047, and 1063–1098; these read QGVP…PPPP, PPPP…GVFP, MKGQ…PKKK, HKRK…NKEG, and GAAF…MSSK. Pro residues-rich tracts occupy residues 543–565 and 578–608; these read IPGP…PPPP and PPPP…PPGG. The FH1 domain occupies 544 to 620; it reads PGPPPPPPLP…PLLSGPIELP (77 aa). The region spanning 625–1025 is the FH2 domain; that stretch reads QKKLYKPDIP…SRRAKLAKEK (401 aa). A coiled-coil region spans residues 999–1050; it reads FLEALKENHKRKEMEEKSRRAKLAKEKAEQEKLERQKKKKQLIDINKEGDET. Composition is skewed to basic and acidic residues over residues 1007–1032 and 1075–1087; these read HKRK…EKLE and RNPD…LERS. Residues 1048 to 1078 enclose the DAD domain; the sequence is DETGVMDNLLEALQSGAAFRDRRKRIPRNPD.

The protein belongs to the formin homology family. Diaphanous subfamily. In terms of assembly, interacts with MAPRE1 and APC.

May be involved in oogenesis. The chain is Protein diaphanous homolog 2 (Diaph2) from Mus musculus (Mouse).